Here is a 149-residue protein sequence, read N- to C-terminus: uncharacterized protein (149 aa).

Position 21 is a phosphoserine (S21). The next 2 helical transmembrane spans lie at 48 to 68 (FMEF…WVLG) and 72 to 92 (VLAA…FQLV). A disordered region spans residues 116-149 (AEEVPPPSYPSLEEENEGNEEIEESEEMNTLLSK). Positions 127–142 (LEEENEGNEEIEESEE) are enriched in acidic residues.

Its subcellular location is the membrane. This is an uncharacterized protein from Schizosaccharomyces pombe (strain 972 / ATCC 24843) (Fission yeast).